The sequence spans 331 residues: L-lactate dehydrogenase A chain (331 aa).

NAD(+) is bound by residues 29 to 57 (GMVG…MEDK) and arginine 98. Residues arginine 105, asparagine 137, and arginine 168 each contribute to the substrate site. NAD(+) is bound at residue asparagine 137. Histidine 192 acts as the Proton acceptor in catalysis. Threonine 247 contributes to the substrate binding site.

Belongs to the LDH/MDH superfamily. LDH family. As to quaternary structure, homotetramer.

The protein resides in the cytoplasm. The catalysed reaction is (S)-lactate + NAD(+) = pyruvate + NADH + H(+). It participates in fermentation; pyruvate fermentation to lactate; (S)-lactate from pyruvate: step 1/1. Interconverts simultaneously and stereospecifically pyruvate and lactate with concomitant interconversion of NADH and NAD(+). This Patagonotothen tessellata (Black southern cod) protein is L-lactate dehydrogenase A chain (ldha).